Reading from the N-terminus, the 440-residue chain is tRNA-2-methylthio-N(6)-dimethylallyladenosine synthase (440 aa).

The MTTase N-terminal domain maps to 5 to 121 (KLLYLETFGC…LPELVRAAEK (117 aa)). Cys14, Cys50, Cys84, Cys159, Cys163, and Cys166 together coordinate [4Fe-4S] cluster. The 231-residue stretch at 145–375 (RTDGVSRFVT…LDLQRRITLE (231 aa)) folds into the Radical SAM core domain. Residues 378 to 440 (KSFVGTVQQV…QNSLQGELCR (63 aa)) form the TRAM domain.

This sequence belongs to the methylthiotransferase family. MiaB subfamily. As to quaternary structure, monomer. It depends on [4Fe-4S] cluster as a cofactor.

It is found in the cytoplasm. It carries out the reaction N(6)-dimethylallyladenosine(37) in tRNA + (sulfur carrier)-SH + AH2 + 2 S-adenosyl-L-methionine = 2-methylsulfanyl-N(6)-dimethylallyladenosine(37) in tRNA + (sulfur carrier)-H + 5'-deoxyadenosine + L-methionine + A + S-adenosyl-L-homocysteine + 2 H(+). In terms of biological role, catalyzes the methylthiolation of N6-(dimethylallyl)adenosine (i(6)A), leading to the formation of 2-methylthio-N6-(dimethylallyl)adenosine (ms(2)i(6)A) at position 37 in tRNAs that read codons beginning with uridine. This is tRNA-2-methylthio-N(6)-dimethylallyladenosine synthase from Geotalea uraniireducens (strain Rf4) (Geobacter uraniireducens).